The chain runs to 1389 residues: uncharacterized protein (1389 aa).

The stretch at 43-94 (STIAQRVSQLENEVAEINVALAEHVNELNSQEKRIDKLEKTVKKKKSNCSDD) forms a coiled coil. A disordered region spans residues 294–353 (HKNRRSKSDNSDLSEYSSSNSDDSECTDSDGSSCSTDGSPDCTESENTESHRSHGKKKHR). Low complexity-rich tracts occupy residues 304 to 314 (SDLSEYSSSNS) and 322 to 335 (SDGS…SPDC). WD repeat units follow at residues 867 to 907 (TFTD…VKHI), 1017 to 1056 (GYNE…TPSG), and 1115 to 1156 (GISN…ILST).

It localises to the virion. This is an uncharacterized protein from Acanthamoeba polyphaga (Amoeba).